The chain runs to 467 residues: ESX-4 secretion system protein eccD4 (467 aa).

11 helical membrane-spanning segments follow: residues 122 to 142, 152 to 172, 186 to 206, 209 to 229, 241 to 261, 264 to 284, 319 to 339, 344 to 364, 374 to 394, 401 to 421, and 439 to 459; these read GALAASCITAGGGLMLVRNAL, ATAGVVAAAGLAALLFAVIAC, VIATIFGAVAGLLAVPGVPGV, VLVAAMAAAATSVLAMRITGC, AVVVAAATLVGAITAAPVPAI, LATLASFGLLEVSARMAVLLA, LTSLLAAFAASATIGAIGTAV, IHRSSMGGIALAAVTGALLLL, SLVFAICGITTVATAFTVAAD, PWIAALTAMLAAVAMFLGFVA, and CLALIAMVPLTAWLCGAYSAV.

The protein belongs to the EccD/Snm4 family. As to quaternary structure, part of the ESX-4 / type VII secretion system (T7SS), which is composed of cytosolic and membrane components.

The protein localises to the cell membrane. This chain is ESX-4 secretion system protein eccD4 (eccD4), found in Mycobacterium tuberculosis (strain CDC 1551 / Oshkosh).